Here is a 247-residue protein sequence, read N- to C-terminus: MPHPPSAALSLPRNGFTLKRFFVAHDRCEMKVGTDSIMLGAWLPLRGDERHILDIGSGSGVLALMMAQRSTAQVDGVEIEPGAATQGQENFLASPWPTRLTMHTLSLQAFSAGCGRRYDLIVSNPPYFAPGVACRTAARATARYTDSLDHAALLRHAAELSCEDGRLALVLPVEAAESVVSKGMTHGWHLLRRTAVRDRADKPVRRTLLLFGRIPAAVQSNTLDIRDDSSEYSCIFRNMTKDFYLFF.

Belongs to the methyltransferase superfamily. tRNA (adenine-N(6)-)-methyltransferase family.

It is found in the cytoplasm. The enzyme catalyses adenosine(37) in tRNA1(Val) + S-adenosyl-L-methionine = N(6)-methyladenosine(37) in tRNA1(Val) + S-adenosyl-L-homocysteine + H(+). Its function is as follows. Specifically methylates the adenine in position 37 of tRNA(1)(Val) (anticodon cmo5UAC). This chain is tRNA1(Val) (adenine(37)-N6)-methyltransferase, found in Edwardsiella ictaluri (strain 93-146).